We begin with the raw amino-acid sequence, 339 residues long: Transmembrane protein 120B (339 aa).

Residues 1-77 (MSGQLERCER…ASREEAELVQ (77 aa)) are a coiled coil. 6 helical membrane passes run 102 to 124 (GLYL…AKFA), 132 to 152 (FKLY…FVLH), 159 to 179 (VFNF…SILI), 187 to 207 (GWWV…LTWP), 270 to 290 (FLLP…VTLF), and 302 to 322 (QVFV…LTTL).

It belongs to the TMEM120 family. As to quaternary structure, heterooligomer with TMEM120A.

The protein localises to the nucleus inner membrane. Functionally, necessary for efficient adipogenesis. Does not show ion channel activity. The polypeptide is Transmembrane protein 120B (Homo sapiens (Human)).